Consider the following 100-residue polypeptide: MLNSNNHQTEWKWPRLIQIMEIGNSAMKNTMSKTLYMSYNFIARTSGKTYHAPVLVVDCSVNEGWLWMRICHNCLGCLCTGYWAAQRTFATTTGLRLVWL.

This is an uncharacterized protein from Mycoplasma pneumoniae (strain ATCC 29342 / M129 / Subtype 1) (Mycoplasmoides pneumoniae).